Here is a 276-residue protein sequence, read N- to C-terminus: Alpha N-terminal protein methyltransferase 1 (276 aa).

Positions 1–57 (MTTTLEEQLSDKLQMMDETTDKVQGSSKQKDDSSIAASSDAKTASPSSSDSSTKVAA) are disordered. A compositionally biased stretch (low complexity) spans 34 to 57 (SIAASSDAKTASPSSSDSSTKVAA). S-adenosyl-L-methionine contacts are provided by residues G114, R119, 136–138 (EQD), 167–168 (LQ), and Q182.

The protein belongs to the methyltransferase superfamily. NTM1 family.

The enzyme catalyses N-terminal L-alanyl-L-prolyl-L-lysyl-[protein] + 3 S-adenosyl-L-methionine = N-terminal N,N,N-trimethyl-L-alanyl-L-prolyl-L-lysyl-[protein] + 3 S-adenosyl-L-homocysteine + 3 H(+). It catalyses the reaction N-terminal L-seryl-L-prolyl-L-lysyl-[protein] + 3 S-adenosyl-L-methionine = N-terminal N,N,N-trimethyl-L-seryl-L-prolyl-L-lysyl-[protein] + 3 S-adenosyl-L-homocysteine + 3 H(+). It carries out the reaction N-terminal L-prolyl-L-prolyl-L-lysyl-[protein] + 2 S-adenosyl-L-methionine = N-terminal N,N-dimethyl-L-prolyl-L-prolyl-L-lysyl-[protein] + 2 S-adenosyl-L-homocysteine + 2 H(+). Alpha-N-methyltransferase that methylates the N-terminus of target proteins containing the N-terminal motif [Ala/Pro/Ser]-Pro-Lys when the initiator Met is cleaved. Specifically catalyzes mono-, di- or tri-methylation of exposed alpha-amino group of Ala or Ser residue in the [Ala/Ser]-Pro-Lys motif and mono- or di-methylation of Pro in the Pro-Pro-Lys motif. The sequence is that of Alpha N-terminal protein methyltransferase 1 (Ntmt) from Drosophila melanogaster (Fruit fly).